Reading from the N-terminus, the 907-residue chain is Avirulence protein A (907 aa).

Composition is skewed to polar residues over residues Met-1–Leu-11 and Ala-124–Pro-136. Disordered stretches follow at residues Met-1–Leu-47 and Asn-116–Tyr-157.

The protein is Avirulence protein A (avrA) of Pseudomonas savastanoi pv. glycinea (Pseudomonas syringae pv. glycinea).